The primary structure comprises 499 residues: Lysosomal Pro-X carboxypeptidase (499 aa).

Positions 1–21 (MGRCSLLLLLLLIAFLTPGAA) are cleaved as a signal peptide. Positions 22–47 (NPVSPSLRAPSSLPWSTSFRSRPTIT) are excised as a propeptide. An N-linked (GlcNAc...) asparagine glycan is attached at Asn-103. The active-site Charge relay system is Ser-181. Residues 196-337 (HLVVGALASS…QNIFQALNVY (142 aa)) are SKS domain. 4 disulfide bridges follow: Cys-217/Cys-375, Cys-235/Cys-313, Cys-266/Cys-346, and Cys-367/Cys-397. N-linked (GlcNAc...) asparagine glycosylation is present at Asn-234. Asn-339 and Asn-348 each carry an N-linked (GlcNAc...) asparagine glycan. N-linked (GlcNAc...) asparagine glycosylation is present at Asn-418. Catalysis depends on charge relay system residues Asp-433 and His-458.

It belongs to the peptidase S28 family. As to quaternary structure, homodimer.

It localises to the lysosome. The catalysed reaction is Cleavage of a -Pro-|-Xaa bond to release a C-terminal amino acid.. Cleaves C-terminal amino acids linked to proline in peptides such as angiotensin II, III and des-Arg9-bradykinin. This cleavage occurs at acidic pH, but enzymatic activity is retained with some substrates at neutral pH. This Bos taurus (Bovine) protein is Lysosomal Pro-X carboxypeptidase (PRCP).